The sequence spans 399 residues: Phosphate acyltransferase (399 aa).

This sequence belongs to the PlsX family. Homodimer. Probably interacts with PlsY.

The protein localises to the cytoplasm. It catalyses the reaction a fatty acyl-[ACP] + phosphate = an acyl phosphate + holo-[ACP]. The protein operates within lipid metabolism; phospholipid metabolism. Catalyzes the reversible formation of acyl-phosphate (acyl-PO(4)) from acyl-[acyl-carrier-protein] (acyl-ACP). This enzyme utilizes acyl-ACP as fatty acyl donor, but not acyl-CoA. This chain is Phosphate acyltransferase, found in Rhodobacter capsulatus (Rhodopseudomonas capsulata).